The chain runs to 160 residues: Transcription elongation factor GreA (160 aa).

Residues 11 to 38 (YDRLMKELERLKSERPAIIQAIKEAREE) are a coiled coil.

It belongs to the GreA/GreB family.

Necessary for efficient RNA polymerase transcription elongation past template-encoded arresting sites. The arresting sites in DNA have the property of trapping a certain fraction of elongating RNA polymerases that pass through, resulting in locked ternary complexes. Cleavage of the nascent transcript by cleavage factors such as GreA or GreB allows the resumption of elongation from the new 3'terminus. GreA releases sequences of 2 to 3 nucleotides. This Nitratidesulfovibrio vulgaris (strain DSM 19637 / Miyazaki F) (Desulfovibrio vulgaris) protein is Transcription elongation factor GreA.